Reading from the N-terminus, the 324-residue chain is MEPASKKSKMGKNVKFNNNKKKYFHAKRQTLQPGQRGFFATCNINEKACVRECYNLLNHYADILYGSEKPENEPEKKQPEEGAGGDAGEDDPKPAAGGTSDDDDDLEAAAAKCREMLSQRKMRFQNVDTNTTNCVFIRTQLEDPVALGKHIINDIATTGKSMSRFVLRLVPIEVVCRANMPDIITAAGELFDKHFLKEPTSYGIIFNHRYNQQIKRDQIITQLAELVNSKNVGNKVDLKEAKKSIIVEVLRGWCLLSVIDNYLECKKFNLAELANPSDKKSSGEGDSKSETSEVANGNDKEQAESSEESKSNDDENKDSTENDK.

2 disordered regions span residues 1–24 (MEPASKKSKMGKNVKFNNNKKKYF) and 67–104 (SEKPENEPEKKQPEEGAGGDAGEDDPKPAAGGTSDDDD). Residues 68 to 80 (EKPENEPEKKQPE) are compositionally biased toward basic and acidic residues. Thr-99 carries the post-translational modification Phosphothreonine. Residue Ser-100 is modified to Phosphoserine. Positions 154 to 260 (DIATTGKSMS…RGWCLLSVID (107 aa)) constitute a THUMP domain. The interval 275–324 (NPSDKKSSGEGDSKSETSEVANGNDKEQAESSEESKSNDDENKDSTENDK) is disordered. 2 stretches are compositionally biased toward basic and acidic residues: residues 277 to 291 (SDKKSSGEGDSKSET) and 298 to 324 (NDKEQAESSEESKSNDDENKDSTENDK).

Belongs to the THUMPD1 family.

In Drosophila melanogaster (Fruit fly), this protein is THUMP domain-containing protein 1 homolog.